A 390-amino-acid chain; its full sequence is Transposase for insertion sequence element IS256 in transposon Tn4001 (390 aa).

It belongs to the transposase mutator family.

Required for the transposition of the insertion element. The protein is Transposase for insertion sequence element IS256 in transposon Tn4001 of Enterococcus faecalis (strain ATCC 700802 / V583).